Reading from the N-terminus, the 247-residue chain is 5'-nucleotidase SurE (247 aa).

Positions 8, 9, 39, and 91 each coordinate a divalent metal cation.

The protein belongs to the SurE nucleotidase family. A divalent metal cation serves as cofactor.

It is found in the cytoplasm. It catalyses the reaction a ribonucleoside 5'-phosphate + H2O = a ribonucleoside + phosphate. In terms of biological role, nucleotidase that shows phosphatase activity on nucleoside 5'-monophosphates. This is 5'-nucleotidase SurE from Laribacter hongkongensis (strain HLHK9).